A 652-amino-acid polypeptide reads, in one-letter code: Apicoplast pyruvate carrier 2 (652 aa).

Over M1 to T45 the chain is Cytoplasmic. Residues M1–S53 are disordered. The next 12 helical transmembrane spans lie at L46–S66, N126–Y146, G167–M187, L189–G209, T212–P232, L278–N298, L345–Q365, S385–S405, L417–E437, A445–L465, S467–G487, and L515–L535. Residues T536–P652 are Cytoplasmic-facing.

The protein belongs to the major facilitator superfamily. Interacts with apicoplast pyruvate carrier 1.

Its subcellular location is the plastid. It localises to the apicoplast. The protein localises to the membrane. In terms of biological role, along with apicoplast pyruvate carrier 1, forms apicoplast pyruvate carrier (APC) complex, which transports pyruvate into the apicoplast and may also transport amino acids like methionine, serine, glycine and tryptophan with low efficiency. Required for maintaining pyruvate-dependent metabolic activities in the apicoplast, such as synthesis of fatty acids, isopentenyl pyrophosphate (IPP), dimethylallyl pyrophosphate (DMAPP) and methylerythritol 4-phosphate (MEP). Required for maintaining the integrity of the apicoplast. Required for normal parasite growth. This chain is Apicoplast pyruvate carrier 2, found in Toxoplasma gondii.